A 1048-amino-acid polypeptide reads, in one-letter code: Ceruloplasmin (1048 aa).

Positions Met1 to Ala19 are cleaved as a signal peptide. 3 Plastocyanin-like domains span residues Lys20–Cys200, Lys209–Cys357, and Asn370–Cys554. Na(+) is bound by residues Tyr55, Gly64, and Tyr67. Cu(2+)-binding residues include His120 and His122. His120 provides a ligand contact to O2. Residue Lys128 coordinates Ca(2+). An N-linked (GlcNAc...) asparagine glycan is attached at Asn138. Residues Gln143, Asp146, and Asp147 each coordinate Ca(2+). Cys174 and Cys200 are joined by a disulfide. 2 residues coordinate Cu(2+): His180 and His182. An O2-binding site is contributed by His180. Asn227 carries N-linked (GlcNAc...) asparagine glycosylation. Ser256 is a binding site for Na(+). An intrachain disulfide couples Cys276 to Cys357. Residues His295, Cys338, and His343 each coordinate Cu(2+). The Na(+) site is built by Phe408, Gly417, and Tyr420. A disulfide bridge links Cys530 with Cys554. 2 N-linked (GlcNAc...) asparagine glycosylation sites follow: Asn556 and Asn582. In terms of domain architecture, Plastocyanin-like 4 spans Arg564–Cys712. Ser611 contributes to the Na(+) binding site. Residues Cys631 and Cys712 are joined by a disulfide bond. Positions 650, 693, 698, and 703 each coordinate Cu(2+). The active-site Nucleophile; for glutathione peroxidase activity is Cys693. At Ser716 the chain carries Phosphoserine. Plastocyanin-like domains lie at Gly724 to Cys894 and Ser902 to Glu1044. N-linked (GlcNAc...) asparagine glycosylation is present at Asn756. 3 residues coordinate Na(+): Phe761, Gly770, and Tyr773. An intrachain disulfide couples Cys868 to Cys894. N-linked (GlcNAc...) asparagine glycosylation occurs at Asn920. Ser949 is a Na(+) binding site. Cu(2+) contacts are provided by His977, His980, His982, His1022, Cys1023, His1024, His1028, and Met1033. His980 and His982 together coordinate O2. His1024 contacts O2.

Belongs to the multicopper oxidase family. In terms of assembly, found in a complex with MPO and LTF; interacts directly with MPO and LTF, which allows Fe(3+) incorporation into LTF, activation of CP ferroxidase activity and protection of CP antioxidant properties by MPO. Requires Cu(2+) as cofactor. Expressed by the liver and secreted in plasma. Also expressed in the hypothalamus, spleen and uterus. No expression in the cortex, heart, intestine or kidney.

The protein resides in the secreted. It catalyses the reaction 4 Fe(2+) + O2 + 4 H(+) = 4 Fe(3+) + 2 H2O. The catalysed reaction is 4 Cu(+) + O2 + 4 H(+) = 4 Cu(2+) + 2 H2O. The enzyme catalyses a hydroperoxide + 2 glutathione = an alcohol + glutathione disulfide + H2O. It carries out the reaction 4 nitric oxide + O2 + 2 H2O = 4 nitrite + 4 H(+). It catalyses the reaction 2 glutathione + H2O2 = glutathione disulfide + 2 H2O. In terms of biological role, multifunctional blue, copper-binding (6-7 atoms per molecule) glycoprotein. It has ferroxidase activity oxidizing Fe(2+) to Fe(3+) without releasing radical oxygen species. It is involved in iron transport across the cell membrane. Copper ions provide a large number of enzymatic activites. Oxidizes highly toxic ferrous ions to the ferric state for further incorporation onto apo-transferrins, catalyzes Cu(+) oxidation and promotes the oxidation of biogenic amines such as norepinephrin and serotonin. Provides Cu(2+) ions for the ascorbate-mediated deaminase degradation of the heparan sulfate chains of GPC1. Has glutathione peroxidase-like activity, can remove both hydrogen peroxide and lipid hydroperoxide in the presence of thiols. Also shows NO-oxidase and NO2 synthase activities that determine endocrine NO homeostasis. In Ovis aries (Sheep), this protein is Ceruloplasmin (CP).